Reading from the N-terminus, the 144-residue chain is D-aminoacyl-tRNA deacylase (144 aa).

Residues 136–137 (GP) carry the Gly-cisPro motif, important for rejection of L-amino acids motif.

It belongs to the DTD family. Homodimer.

The protein resides in the cytoplasm. It catalyses the reaction glycyl-tRNA(Ala) + H2O = tRNA(Ala) + glycine + H(+). It carries out the reaction a D-aminoacyl-tRNA + H2O = a tRNA + a D-alpha-amino acid + H(+). An aminoacyl-tRNA editing enzyme that deacylates mischarged D-aminoacyl-tRNAs. Also deacylates mischarged glycyl-tRNA(Ala), protecting cells against glycine mischarging by AlaRS. Acts via tRNA-based rather than protein-based catalysis; rejects L-amino acids rather than detecting D-amino acids in the active site. By recycling D-aminoacyl-tRNA to D-amino acids and free tRNA molecules, this enzyme counteracts the toxicity associated with the formation of D-aminoacyl-tRNA entities in vivo and helps enforce protein L-homochirality. The protein is D-aminoacyl-tRNA deacylase of Vibrio cholerae serotype O1 (strain ATCC 39541 / Classical Ogawa 395 / O395).